A 1060-amino-acid polypeptide reads, in one-letter code: DNA-directed RNA polymerase subunit beta (1060 aa).

This sequence belongs to the RNA polymerase beta chain family. In terms of assembly, in plastids the minimal PEP RNA polymerase catalytic core is composed of four subunits: alpha, beta, beta', and beta''. When a (nuclear-encoded) sigma factor is associated with the core the holoenzyme is formed, which can initiate transcription.

The protein resides in the plastid. It is found in the chloroplast. The enzyme catalyses RNA(n) + a ribonucleoside 5'-triphosphate = RNA(n+1) + diphosphate. Its function is as follows. DNA-dependent RNA polymerase catalyzes the transcription of DNA into RNA using the four ribonucleoside triphosphates as substrates. The protein is DNA-directed RNA polymerase subunit beta of Lactuca sativa (Garden lettuce).